A 308-amino-acid polypeptide reads, in one-letter code: Cytochrome b (308 aa).

A run of 4 helical transmembrane segments spans residues 1–21 (FGSL…LLAM), 45–66 (WLIR…YLHI), 81–101 (WNIG…GYVL), and 146–166 (FFAF…VHLT). Heme b-binding residues include histidine 51 and histidine 65. Residues histidine 150 and histidine 164 each contribute to the heme b site. A ubiquinone is bound at residue histidine 169. Transmembrane regions (helical) follow at residues 194-214 (IKDL…ALFS), 256-276 (LGGV…PLLH), and 288-308 (LSQI…WVGS).

This sequence belongs to the cytochrome b family. The cytochrome bc1 complex contains 11 subunits: 3 respiratory subunits (MT-CYB, CYC1 and UQCRFS1), 2 core proteins (UQCRC1 and UQCRC2) and 6 low-molecular weight proteins (UQCRH/QCR6, UQCRB/QCR7, UQCRQ/QCR8, UQCR10/QCR9, UQCR11/QCR10 and a cleavage product of UQCRFS1). This cytochrome bc1 complex then forms a dimer. The cofactor is heme b.

It is found in the mitochondrion inner membrane. Its function is as follows. Component of the ubiquinol-cytochrome c reductase complex (complex III or cytochrome b-c1 complex) that is part of the mitochondrial respiratory chain. The b-c1 complex mediates electron transfer from ubiquinol to cytochrome c. Contributes to the generation of a proton gradient across the mitochondrial membrane that is then used for ATP synthesis. This chain is Cytochrome b (MT-CYB), found in Corvus corax (Common raven).